The following is a 155-amino-acid chain: 6,7-dimethyl-8-ribityllumazine synthase (155 aa).

5-amino-6-(D-ribitylamino)uracil contacts are provided by residues Phe24, 58 to 60 (AFE), and 82 to 84 (AII). 87–88 (AT) contributes to the (2S)-2-hydroxy-3-oxobutyl phosphate binding site. His90 functions as the Proton donor in the catalytic mechanism. A 5-amino-6-(D-ribitylamino)uracil-binding site is contributed by Phe115. Arg129 serves as a coordination point for (2S)-2-hydroxy-3-oxobutyl phosphate.

Belongs to the DMRL synthase family.

It carries out the reaction (2S)-2-hydroxy-3-oxobutyl phosphate + 5-amino-6-(D-ribitylamino)uracil = 6,7-dimethyl-8-(1-D-ribityl)lumazine + phosphate + 2 H2O + H(+). It functions in the pathway cofactor biosynthesis; riboflavin biosynthesis; riboflavin from 2-hydroxy-3-oxobutyl phosphate and 5-amino-6-(D-ribitylamino)uracil: step 1/2. Functionally, catalyzes the formation of 6,7-dimethyl-8-ribityllumazine by condensation of 5-amino-6-(D-ribitylamino)uracil with 3,4-dihydroxy-2-butanone 4-phosphate. This is the penultimate step in the biosynthesis of riboflavin. This is 6,7-dimethyl-8-ribityllumazine synthase from Prosthecochloris aestuarii (strain DSM 271 / SK 413).